The chain runs to 1200 residues: NACHT, LRR and PYD domains-containing protein 5 (1200 aa).

The region spanning 57–148 (SLTFSSYGLQ…SEKARDDMKR (92 aa)) is the Pyrin domain. Residues 142–152 (ARDDMKRHSPE) show a composition bias toward basic and acidic residues. The disordered stretch occupies residues 142–232 (ARDDMKRHSP…TEEQGHGGDT (91 aa)). Residues 173 to 182 (QAVQQDSATA) are compositionally biased toward polar residues. Low complexity-rich tracts occupy residues 192–202 (QAMEQEGATAA) and 209–221 (ISQA…ATAA). Residues 280–602 (RTVVLHGKSG…ALYYVLEGLE (323 aa)) enclose the NACHT domain. 286–293 (GKSGIGKS) serves as a coordination point for ATP. LRR repeat units lie at residues 704–727 (LNSF…SFCL), 730–753 (CPYL…AEAC), 780–803 (HPHL…TLCA), 809–832 (TCKI…LWRI), 836–863 (NRNL…ALKH), 865–892 (KCLL…ILTT), 893–916 (SPSL…PLSD), 950–973 (NRSL…LLCR), 979–1002 (HCSL…FLAL), 1007–1034 (NSWL…VMRE), 1036–1059 (SCHL…SLSC), 1064–1092 (SRHL…LKQK), and 1121–1142 (NRHL…MMKL).

This sequence belongs to the NLRP family. As to quaternary structure, component of the subcortical maternal complex (SCMC), at least composed of NLRP5, KHDC3, OOEP, and TLE6 isoform 1. Within the complex, interacts with OOEP, KHDC3L and TLE6. The SCMC may facilitate translocation of its components between the nuclear and cytoplasmic compartments. As part of the SCMC interacts with the SCMC-associated protein ZBED3. As part of the SCMC interacts with the SCMC-associated protein CFL1/Cofilin-1. Interacts with PRKCE. Interacts with TUBB3 at cytoskeleton microtubules. In terms of processing, phosphorylated by PRKCE. As to expression, expressed in cumulus cells (at protein level). Highly abundant in oocytes and early embryos, however poorly expressed in somatic tissues such as the liver and spinal cord.

It is found in the cytoplasm. It localises to the cytoplasmic vesicle. The protein localises to the secretory vesicle. Its subcellular location is the cortical granule. The protein resides in the mitochondrion. It is found in the nucleus. It localises to the nucleolus. The protein localises to the golgi apparatus. In terms of biological role, component of the subcortical maternal complex (SCMC), a multiprotein complex that plays a key role in early embryonic development. The SCMC complex is a structural constituent of cytoplasmic lattices, which consist in fibrous structures found in the cytoplasm of oocytes and preimplantation embryos. They are required to store maternal proteins critical for embryonic development, such as proteins that control epigenetic reprogramming of the preimplantation embryo, and prevent their degradation or activation. Required for the localization of cortical granules to the cortex of oocytes, via association with the cortical actin scaffold. Required for cortical actin clearance prior to oocyte exocytosis and prevention of polyspermy. Involved in regulating post-fertilization Ca(2+) release and endoplasmic reticulum storage (ER) storage via regulation of cellular localization. May be involved in the localization of mitochondria to the cytoplasm and perinuclear region in oocytes and early stage embryos, independent of its role in CPL formation. This is NACHT, LRR and PYD domains-containing protein 5 (NLRP5) from Homo sapiens (Human).